We begin with the raw amino-acid sequence, 206 residues long: Large ribosomal subunit protein uL13y (206 aa).

The protein belongs to the universal ribosomal protein uL13 family.

This Arabidopsis thaliana (Mouse-ear cress) protein is Large ribosomal subunit protein uL13y (RPL13AB).